Reading from the N-terminus, the 431-residue chain is Adenylosuccinate lyase (431 aa).

Residues 4-5 (RY), 67-69 (NHD), and 93-94 (TS) each bind N(6)-(1,2-dicarboxyethyl)-AMP. His141 serves as the catalytic Proton donor/acceptor. Gln212 serves as a coordination point for N(6)-(1,2-dicarboxyethyl)-AMP. The Proton donor/acceptor role is filled by Ser262. Residues Ser263, 268-270 (KKN), and 307-311 (SVERY) contribute to the N(6)-(1,2-dicarboxyethyl)-AMP site.

It belongs to the lyase 1 family. Adenylosuccinate lyase subfamily. In terms of assembly, homotetramer. Residues from neighboring subunits contribute catalytic and substrate-binding residues to each active site.

It carries out the reaction N(6)-(1,2-dicarboxyethyl)-AMP = fumarate + AMP. The enzyme catalyses (2S)-2-[5-amino-1-(5-phospho-beta-D-ribosyl)imidazole-4-carboxamido]succinate = 5-amino-1-(5-phospho-beta-D-ribosyl)imidazole-4-carboxamide + fumarate. It participates in purine metabolism; AMP biosynthesis via de novo pathway; AMP from IMP: step 2/2. It functions in the pathway purine metabolism; IMP biosynthesis via de novo pathway; 5-amino-1-(5-phospho-D-ribosyl)imidazole-4-carboxamide from 5-amino-1-(5-phospho-D-ribosyl)imidazole-4-carboxylate: step 2/2. Functionally, catalyzes two reactions in de novo purine nucleotide biosynthesis. Catalyzes the breakdown of 5-aminoimidazole- (N-succinylocarboxamide) ribotide (SAICAR or 2-[5-amino-1-(5-phospho-beta-D-ribosyl)imidazole-4-carboxamido]succinate) to 5-aminoimidazole-4-carboxamide ribotide (AICAR or 5-amino-1-(5-phospho-beta-D-ribosyl)imidazole-4-carboxamide) and fumarate, and of adenylosuccinate (ADS or N(6)-(1,2-dicarboxyethyl)-AMP) to adenosine monophosphate (AMP) and fumarate. The polypeptide is Adenylosuccinate lyase (purB) (Thermotoga maritima (strain ATCC 43589 / DSM 3109 / JCM 10099 / NBRC 100826 / MSB8)).